A 159-amino-acid chain; its full sequence is NADH-quinone oxidoreductase subunit B (159 aa).

The [4Fe-4S] cluster site is built by Cys37, Cys38, Cys102, and Cys132.

The protein belongs to the complex I 20 kDa subunit family. In terms of assembly, NDH-1 is composed of 14 different subunits. Subunits NuoB, C, D, E, F, and G constitute the peripheral sector of the complex. [4Fe-4S] cluster serves as cofactor.

It localises to the cell inner membrane. The enzyme catalyses a quinone + NADH + 5 H(+)(in) = a quinol + NAD(+) + 4 H(+)(out). Functionally, NDH-1 shuttles electrons from NADH, via FMN and iron-sulfur (Fe-S) centers, to quinones in the respiratory chain. Couples the redox reaction to proton translocation (for every two electrons transferred, four hydrogen ions are translocated across the cytoplasmic membrane), and thus conserves the redox energy in a proton gradient. The chain is NADH-quinone oxidoreductase subunit B from Polaromonas naphthalenivorans (strain CJ2).